We begin with the raw amino-acid sequence, 217 residues long: Uracil-DNA glycosylase (217 aa).

D62 (proton acceptor) is an active-site residue.

It belongs to the uracil-DNA glycosylase (UDG) superfamily. UNG family.

The protein resides in the cytoplasm. The catalysed reaction is Hydrolyzes single-stranded DNA or mismatched double-stranded DNA and polynucleotides, releasing free uracil.. Functionally, excises uracil residues from the DNA which can arise as a result of misincorporation of dUMP residues by DNA polymerase or due to deamination of cytosine. This is Uracil-DNA glycosylase from Streptococcus mutans serotype c (strain ATCC 700610 / UA159).